The chain runs to 376 residues: Pregnancy-associated glycoprotein 2 (376 aa).

A signal peptide spans 1 to 15; that stretch reads MKWLVLLGLVALSEC. Asn51 and Asn71 each carry an N-linked (GlcNAc...) asparagine glycan. The Peptidase A1 domain maps to 68 to 373; sequence YVGNITIGTP…DRKNRRIGLA (306 aa). Asp86 is a catalytic residue. A disulfide bridge links Cys99 with Cys104. Asn114, Asn248, and Asn252 each carry an N-linked (GlcNAc...) asparagine glycan. Cysteines 258 and 262 form a disulfide. Residue Asp267 is part of the active site. The cysteines at positions 300 and 333 are disulfide-linked. An N-linked (GlcNAc...) asparagine glycan is attached at Asn343.

The protein belongs to the peptidase A1 family. In terms of processing, N-Glycosylated; the glycans terminate in either N-acetyl-galactosamine (GalNAc) or N-acetyllactosamine. Terminal GalNAc on Asn-linked glycans is greatly reduced prior to parturition while lactosamine-type N-glycans remain unaltered. Trophoblast and placental tissue. Localized to both the mononucleate and binucleate cells of the trophectoderm.

Its subcellular location is the secreted. It localises to the extracellular space. PAG2 or a processed derivative of this molecule might represent a factor that binds the LH receptor. The protein is Pregnancy-associated glycoprotein 2 (PAG2) of Bos taurus (Bovine).